We begin with the raw amino-acid sequence, 191 residues long: Peptidyl-tRNA hydrolase (191 aa).

Tyr14 serves as a coordination point for tRNA. Residue His19 is the Proton acceptor of the active site. Tyr65, Asn67, and Asn113 together coordinate tRNA.

This sequence belongs to the PTH family. As to quaternary structure, monomer.

The protein localises to the cytoplasm. It catalyses the reaction an N-acyl-L-alpha-aminoacyl-tRNA + H2O = an N-acyl-L-amino acid + a tRNA + H(+). In terms of biological role, hydrolyzes ribosome-free peptidyl-tRNAs (with 1 or more amino acids incorporated), which drop off the ribosome during protein synthesis, or as a result of ribosome stalling. Its function is as follows. Catalyzes the release of premature peptidyl moieties from peptidyl-tRNA molecules trapped in stalled 50S ribosomal subunits, and thus maintains levels of free tRNAs and 50S ribosomes. The sequence is that of Peptidyl-tRNA hydrolase from Nitrosospira multiformis (strain ATCC 25196 / NCIMB 11849 / C 71).